The primary structure comprises 91 residues: uncharacterized protein (91 aa).

The next 3 helical transmembrane spans lie at 9–29, 30–50, and 67–87; these read LIHA…YTAG, LGIF…VIFG, and WLGC…VLKF.

It localises to the cell membrane. This is an uncharacterized protein from Methanocaldococcus jannaschii (strain ATCC 43067 / DSM 2661 / JAL-1 / JCM 10045 / NBRC 100440) (Methanococcus jannaschii).